The sequence spans 904 residues: Disks large homolog 1 (904 aa).

Residues Arg-4–Pro-64 enclose the L27 domain. Thr-115 is subject to Phosphothreonine. A phosphoserine mark is found at Ser-122, Ser-138, and Ser-158. The segment at Pro-162 to Tyr-212 is interaction with SH3 domains. PDZ domains follow at residues Glu-224 to Arg-310, Glu-319 to Pro-405, and Lys-466 to Arg-546. Positions Glu-224–Arg-546 are required for interaction with MARCHF2. At Ser-232 the chain carries Phosphoserine. Tyr-399 is modified (phosphotyrosine). Phosphoserine occurs at positions 568, 573, 575, 579, 598, 619, 676, 684, 687, 709, and 834. The region spanning Lys-581–Glu-651 is the SH3 domain. The tract at residues Ser-662–Tyr-693 is disordered. A compositionally biased stretch (polar residues) spans Val-682 to Tyr-693. Positions Thr-714–Glu-889 constitute a Guanylate kinase-like domain.

The protein belongs to the MAGUK family. As to quaternary structure, homotetramer. Interacts (via guanylate kinase-like domain) with DLGAP1, DLGAP2, DLGAP3, DLGAP4 and MAP1A. Interacts (via guanylate kinase-like domain) with KIF13B. May interact with HTR2A. Interacts (via PDZ domains) with GRIA1. Interacts (via PDZ domains) with GRIN2A. Interacts (via PDZ domains) with KCND2 and KCND3. Interacts (via PDZ domains) with KCNA1, KCNA2, KCNA3 and KCNA4. Interacts (via PDZ domains) with ADGRA3. Interacts with KCNF1. Interacts with CAMK2. Interacts with cytoskeleton-associated protein EPB41. Interacts with cytoskeleton-associated protein EZR. Found in a complex with KCNA5 and CAV3. Found in a complex with APC and CTNNB1. Interacts (via PDZ domains) with APC. Interacts with CDH1 through binding to PIK3R1. Forms multiprotein complexes with CASK, LIN7A, LIN7B, LIN7C, APBA1, and KCNJ12. Interacts with TOPK. Forms a tripartite complex composed of DLG1, MPP7 and LIN7 (LIN7A or LIN7C). May interact with TJAP1. Interacts with PTEN. Interacts with FRMPD4 (via C-terminus). Interacts with LRFN1, LRFN2 and LRFN4. Interacts with SFPQ. Interacts (via PDZ domains) with ADGRA2 (via PDZ-binding motif). Interacts with ADAM10; this interaction recruits ADAM10 to the cell membrane during long-term depression in hippocampal neurons. Interacts with DGKI (via PDZ-binding motif). Interacts (via PDZ domains) with MARCHF2 (via PDZ domain); the interaction leads to DLG1 ubiqtuitination and degradation. Interacts (via N-terminus) with MPP3; this interaction connects CADM1 with DLG1 and links CADM1 with the regulatory subunit of phosphoinositide-3-kinase (PI3K) by forming a multiprotein complex and participates in cell spreading. (Microbial infection) Interacts with HTLV-1 protein Tax. In terms of assembly, (Microbial infection) Interacts (via PDZ domains 1 and 2) with influenza A virus protein NS1; the interaction results in the translocation of DLG1 from the cell membrane to perinuclear puncta. Acts as a scaffold protein to facilitate the interaction between LIN7C and influenza A virus protein NS1; the interaction facilitates translocation of LIN7C to cytoplasmic puncta. As to quaternary structure, (Microbial infection) Interacts with human papillomavirus 18/HPV-18 protein E6. Phosphorylated by MAPK12. Phosphorylation of Ser-232 regulates association with GRIN2A. Post-translationally, ubiquitinated; by MARCHF2 which results in its degradation. Abundantly expressed in atrial myocardium (at protein level). Expressed in lung fibroblasts, cervical epithelial and B-cells (at protein level). Expressed in the brain (at protein level). Widely expressed, with isoforms displaying different expression profiles.

It localises to the cell membrane. Its subcellular location is the basolateral cell membrane. The protein localises to the endoplasmic reticulum membrane. It is found in the postsynaptic density. The protein resides in the synapse. It localises to the sarcolemma. Its subcellular location is the apical cell membrane. The protein localises to the cell junction. It is found in the cytoplasm. In terms of biological role, essential multidomain scaffolding protein required for normal development. Recruits channels, receptors and signaling molecules to discrete plasma membrane domains in polarized cells. Promotes epithelial cell layer barrier function via maintaining cell-cell adhesion. May also play a role in adherens junction assembly, signal transduction, cell proliferation, synaptogenesis and lymphocyte activation. Regulates the excitability of cardiac myocytes by modulating the functional expression of Kv4 channels. Functional regulator of Kv1.5 channel. During long-term depression in hippocampal neurons, it recruits ADAM10 to the plasma membrane. This Homo sapiens (Human) protein is Disks large homolog 1.